We begin with the raw amino-acid sequence, 1201 residues long: HEAT repeat-containing protein 6 (1201 aa).

Residues M1–S25 form a disordered region. The stretch at P182 to S221 is one HEAT 1 repeat. A disordered region spans residues A321–S390. The span at Q341–K352 shows a compositional bias: basic residues. The span at S375 to S390 shows a compositional bias: polar residues. HEAT repeat units lie at residues G460–Q498, S523–Y560, and G566–P603. The span at S618–S633 shows a compositional bias: polar residues. The segment at S618 to P653 is disordered.

In Danio rerio (Zebrafish), this protein is HEAT repeat-containing protein 6 (heatr6).